Reading from the N-terminus, the 449-residue chain is Heterogeneous nuclear ribonucleoprotein H (449 aa).

M1 is modified (N-acetylmethionine). M2 is subject to N-acetylmethionine; in Heterogeneous nuclear ribonucleoprotein H, N-terminally processed. Residues 11–90 (FVVKVRGLPW…RYVEVFKSNN (80 aa)) form the RRM 1 domain. S23 is subject to Phosphoserine. Residue K35 forms a Glycyl lysine isopeptide (Lys-Gly) (interchain with G-Cter in SUMO2) linkage. 2 positions are modified to phosphoserine: S54 and S63. Residues K87 and K98 each participate in a glycyl lysine isopeptide (Lys-Gly) (interchain with G-Cter in SUMO2) cross-link. Residues 111-188 (GFVRLRGLPF…RYIEIFKSSR (78 aa)) enclose the RRM 2 domain. A Dimethylated arginine; alternate modification is found at R233. The residue at position 233 (R233) is an Omega-N-methylarginine; alternate. A 1-1 repeat occupies 234 to 249 (GAYGGGYGGYDDYNGY). Positions 234 to 433 (GAYGGGYGGY…YGGQSSMSGY (200 aa)) are 2 X 16 AA Gly-rich approximate repeats. Y246 carries the post-translational modification Phosphotyrosine. An RRM 3 domain is found at 289–364 (HCVHMRGLPY…RYVELFLNST (76 aa)). Position 310 is a phosphoserine (S310). 3 repeat units span residues 354–372 (HRYV…GGAY), 374–392 (HRYV…GGAY), and 418–433 (GGYG…MSGY). The 2 X 19 AA perfect repeats stretch occupies residues 354-392 (HRYVELFLNSTAGASGGAYEHRYVELFLNSTAGASGGAY).

As to quaternary structure, part of a ternary complex containing FUBP2, PTBP1, PTBP2 and HNRNPH1. Identified in the spliceosome C complex. Interacts with IGF2BP1. Interacts with CUGBP1; the interaction is RNA-dependent. Interacts with MBNL1; the interaction in RNA-independent.

Its subcellular location is the nucleus. The protein localises to the nucleoplasm. This protein is a component of the heterogeneous nuclear ribonucleoprotein (hnRNP) complexes which provide the substrate for the processing events that pre-mRNAs undergo before becoming functional, translatable mRNAs in the cytoplasm. Mediates pre-mRNA alternative splicing regulation. Inhibits, together with CUGBP1, insulin receptor (IR) pre-mRNA exon 11 inclusion in myoblast. Binds to the IR RNA. Binds poly(RG). This Rattus norvegicus (Rat) protein is Heterogeneous nuclear ribonucleoprotein H (Hnrnph1).